We begin with the raw amino-acid sequence, 219 residues long: Type-5 uracil-DNA glycosylase (219 aa).

Residues cysteine 13, cysteine 16, cysteine 115, and cysteine 130 each coordinate [4Fe-4S] cluster.

This sequence belongs to the uracil-DNA glycosylase (UDG) superfamily. Type 5 (UDGb) family.

DNA glycosylase with broad substrate specificity. Can remove uracil from double-stranded DNA containing either a U/G, U/A, U/C or U/T base pair. Can also excise hypoxanthine from double-stranded DNA containing G/I, T/I, and A/I base pairs, xanthine from both double-stranded and single stranded DNA, thymine from G/T mismatched DNA, 5'-hydroxymethyluracil and 5'-fluorouracil. The chain is Type-5 uracil-DNA glycosylase from Thermus thermophilus (strain ATCC 27634 / DSM 579 / HB8).